The sequence spans 326 residues: Polycomb complex protein BMI-1-A (326 aa).

The RING-type zinc-finger motif lies at 18–57 (CVLCGGYFIDATTIIECLHSFCKTCIVRYLETSKYCPICD). The short motif at 81 to 95 (KLVPGLFKGEMKRRR) is the Nuclear localization signal element. Disordered stretches follow at residues 239-262 (NPHT…DKAG) and 274-326 (CIPS…ISSG). Over residues 290-303 (ISSTINGTSSSSSS) the composition is skewed to low complexity.

Component of a PRC1-like complex. Interacts with cbx4.

The protein localises to the nucleus. Its function is as follows. Component of a Polycomb group (PcG) multiprotein PRC1-like complex, a complex class required to maintain the transcriptionally repressive state of many genes, including Hox genes, throughout development. PcG PRC1 complex acts via chromatin remodeling and modification of histones; it mediates monoubiquitination of histone H2A 'Lys-119', rendering chromatin heritably changed in its expressibility. In the PRC1 complex, it is required to stimulate the E3 ubiquitin-protein ligase activity of rnf2. The sequence is that of Polycomb complex protein BMI-1-A (bmi1a) from Xenopus laevis (African clawed frog).